A 1776-amino-acid polypeptide reads, in one-letter code: COPII coat assembly protein SEC16 (1776 aa).

4 disordered regions span residues 1–129 (MDSD…EKRV), 143–277 (AQAL…WGNT), 292–817 (ESVE…TGMK), and 1428–1776 (GVER…GQAS). A compositionally biased stretch (acidic residues) spans 46-79 (SSEEESEEEEEEEDDDEDDEEEEDSDEDDDEEEN). Polar residues-rich tracts occupy residues 111–124 (LTKSTPIVQASQGS) and 144–158 (QALNISGNPATGQTK). The span at 162-181 (TDEAESDEDSEEEESSDEEA) shows a compositional bias: acidic residues. Residues 187-196 (HQADNYEHQG) are compositionally biased toward basic and acidic residues. Composition is skewed to acidic residues over residues 217–226 (AAPESDDWGD) and 321–353 (DLDLDLDEDFLPDNEDGPVIELSDDEGFLDDEP). 2 stretches are compositionally biased toward polar residues: residues 394–406 (NPPQGSMTRSITT) and 415–439 (YGQNVAYQQQQAARPTMPTSAQSYA). Residues 522 to 533 (PAVPPKSAPPAK) are compositionally biased toward pro residues. Residues 557–573 (PQPAAAAQSPSLQGPPQ) are compositionally biased toward low complexity. The segment covering 612–627 (SQPSVPTRQNSLPIPQ) has biased composition (polar residues). Over residues 629–644 (TAPPPSSRYSPAPPSV) the composition is skewed to pro residues. Polar residues-rich tracts occupy residues 692 to 704 (TPSQTYAPRTSSP) and 716 to 734 (NTTNVSEQQLPGHHVTQSA). The segment covering 761–782 (DRPPTTARSDTPPPTRSSTSSA) has biased composition (low complexity). 2 stretches are compositionally biased toward polar residues: residues 1445–1454 (RTQAKMQSYS) and 1477–1496 (NEETASASSFGGYQPQQGTG). Over residues 1560 to 1586 (SDADKKADEAFRKAAEADAKRDKENAA) the composition is skewed to basic and acidic residues. Over residues 1652-1661 (PMGARSASGG) the composition is skewed to low complexity. Over residues 1662 to 1671 (MPPPSGPPPS) the composition is skewed to pro residues.

Belongs to the SEC16 family.

The protein localises to the endoplasmic reticulum membrane. Functionally, involved in the initiation of assembly of the COPII coat required for the formation of transport vesicles from the endoplasmic reticulum (ER) and the selection of cargo molecules. Also involved in autophagy. The sequence is that of COPII coat assembly protein SEC16 (SEC16) from Phaeosphaeria nodorum (strain SN15 / ATCC MYA-4574 / FGSC 10173) (Glume blotch fungus).